The chain runs to 145 residues: Large ribosomal subunit protein uL11 (145 aa).

Belongs to the universal ribosomal protein uL11 family. Part of the ribosomal stalk of the 50S ribosomal subunit. Interacts with L10 and the large rRNA to form the base of the stalk. L10 forms an elongated spine to which L12 dimers bind in a sequential fashion forming a multimeric L10(L12)X complex. One or more lysine residues are methylated.

Its function is as follows. Forms part of the ribosomal stalk which helps the ribosome interact with GTP-bound translation factors. The chain is Large ribosomal subunit protein uL11 from Aquifex aeolicus (strain VF5).